Here is a 185-residue protein sequence, read N- to C-terminus: Putative manganese efflux pump MntP (185 aa).

Transmembrane regions (helical) follow at residues 6-26, 41-61, 65-85, 107-127, 132-152, and 164-184; these read IFII…ACGL, FHFG…GLTV, VETY…GKMI, LVFL…SFSI, IAFP…FGLW, and SHIA…KLLL.

It belongs to the MntP (TC 9.B.29) family.

Its subcellular location is the cell inner membrane. In terms of biological role, probably functions as a manganese efflux pump. The polypeptide is Putative manganese efflux pump MntP (Maridesulfovibrio salexigens (strain ATCC 14822 / DSM 2638 / NCIMB 8403 / VKM B-1763) (Desulfovibrio salexigens)).